The primary structure comprises 65 residues: Vespid chemotactic peptide 5h (65 aa).

Residues 1–23 form the signal peptide; sequence MKYNIVFLFAIIASLACLQLTFA. AXPX repeat units lie at residues 23–26, 27–30, 31–34, 35–38, 39–42, 43–46, and 47–50; these read AAPA, ASPL, ANPG, ASPD, AAPN, ADPL, and ADPF. A propeptide spanning residues 24 to 49 is cleaved from the precursor; the sequence is APAASPLANPGASPDAAPNADPLADP. Leucine 62 carries the leucine amide modification.

This sequence belongs to the MCD family. Crabrolin subfamily. Expressed by the venom gland.

It is found in the secreted. Its function is as follows. Shows antimicrobial activity against the Gram-negative bacteria E.coli ATCC 25922 (MIC=30 ug/ml), the Gram-positive bacteria S.aureus ATCC 2592 (MIC=5 ug/ml) and the fungus C.albicans ATCC 2002 (MIC=25 ug/ml). Acts as a mast cell degranulating peptide. Its mast cell degranulation activity may be related to the activation of G-protein coupled receptors in mast cells as well as interaction with other proteins located in cell endosomal membranes in the mast cells. Induces the chemotaxis of neutrophils. The chain is Vespid chemotactic peptide 5h from Vespa magnifica (Hornet).